The primary structure comprises 188 residues: dCTP deaminase (188 aa).

Residues 111–116, 135–137, glutamine 156, tyrosine 170, and glutamine 180 contribute to the dCTP site; these read KSTYAR and TLE. Glutamate 137 (proton donor/acceptor) is an active-site residue.

Belongs to the dCTP deaminase family. Homotrimer.

The catalysed reaction is dCTP + H2O + H(+) = dUTP + NH4(+). The protein operates within pyrimidine metabolism; dUMP biosynthesis; dUMP from dCTP (dUTP route): step 1/2. Catalyzes the deamination of dCTP to dUTP. The chain is dCTP deaminase from Pseudomonas savastanoi pv. phaseolicola (strain 1448A / Race 6) (Pseudomonas syringae pv. phaseolicola (strain 1448A / Race 6)).